Reading from the N-terminus, the 936-residue chain is Lipoxygenase 2.1, chloroplastic (936 aa).

Residues 1–69 (MLTATKPLVG…LSADSNGAAV (69 aa)) are disordered. The segment covering 47–59 (STSTSTTTTTTTT) has biased composition (low complexity). Residues 88–217 (MKATVTVHMS…CTPDKRVFFP (130 aa)) enclose the PLAT domain. Residues 220 to 936 (SYLPSQTPKG…EMGIPNSISI (717 aa)) form the Lipoxygenase domain. The segment at 264-308 (LGNPDDDNNPTTRPVLGGKEHPYPRRCRTGRPRSKKDPFSEERSH) is disordered. Residues 287–297 (PRRCRTGRPRS) are compositionally biased toward basic residues. Residues 298–308 (KKDPFSEERSH) are compositionally biased toward basic and acidic residues. Residues histidine 587, histidine 592, histidine 777, asparagine 781, and isoleucine 936 each coordinate Fe cation.

It belongs to the lipoxygenase family. It depends on Fe cation as a cofactor. Post-translationally, the N-terminus is blocked.

The protein localises to the plastid. It localises to the chloroplast. It carries out the reaction (9Z,12Z)-octadecadienoate + O2 = (13S)-hydroperoxy-(9Z,11E)-octadecadienoate. The catalysed reaction is (9Z,12Z,15Z)-octadecatrienoate + O2 = (13S)-hydroperoxy-(9Z,11E,15Z)-octadecatrienoate. It participates in lipid metabolism; oxylipin biosynthesis. Plant lipoxygenase may be involved in a number of diverse aspects of plant physiology including growth and development, pest resistance, and senescence or responses to wounding. This enzyme is possibly involved in jasmonic acid synthesis. It exhibits linoleate 13-lipoxygenase and arachidonate 15-lipoxygenase activity. The protein is Lipoxygenase 2.1, chloroplastic (LOX2.1) of Hordeum vulgare (Barley).